The following is a 1342-amino-acid chain: DNA-directed RNA polymerase subunit beta (1342 aa).

This sequence belongs to the RNA polymerase beta chain family. The RNAP catalytic core consists of 2 alpha, 1 beta, 1 beta' and 1 omega subunit. When a sigma factor is associated with the core the holoenzyme is formed, which can initiate transcription.

The catalysed reaction is RNA(n) + a ribonucleoside 5'-triphosphate = RNA(n+1) + diphosphate. Its function is as follows. DNA-dependent RNA polymerase catalyzes the transcription of DNA into RNA using the four ribonucleoside triphosphates as substrates. The sequence is that of DNA-directed RNA polymerase subunit beta from Yersinia pseudotuberculosis serotype O:1b (strain IP 31758).